The chain runs to 63 residues: Large ribosomal subunit protein bL35 (63 aa).

This sequence belongs to the bacterial ribosomal protein bL35 family.

In Campylobacter jejuni subsp. jejuni serotype O:2 (strain ATCC 700819 / NCTC 11168), this protein is Large ribosomal subunit protein bL35.